The sequence spans 431 residues: E3 ubiquitin-protein ligase marc-3 (431 aa).

Residues 5 to 74 form an RING-CH-type zinc finger; that stretch reads NASLGPAVCR…EICKFAFKIK (70 aa). Zn(2+) is bound by residues C13, C16, C38, C40, H48, C51, C64, and C67. Helical transmembrane passes span 98–118 and 157–177; these read PFID…GVFM and LFLF…VSAL. Disordered stretches follow at residues 267 to 289 and 327 to 349; these read TSPD…FGRR and SRAT…RDMR. The span at 273-282 shows a compositional bias: basic and acidic residues; sequence NTHHHDESRN.

Its subcellular location is the cell membrane. It localises to the endosome membrane. The catalysed reaction is S-ubiquitinyl-[E2 ubiquitin-conjugating enzyme]-L-cysteine + [acceptor protein]-L-lysine = [E2 ubiquitin-conjugating enzyme]-L-cysteine + N(6)-ubiquitinyl-[acceptor protein]-L-lysine.. It participates in protein modification; protein ubiquitination. In terms of biological role, E3 ubiquitin-protein ligase which positively regulates the fast polyspermy block during fertilization, preventing entry of more than one sperm into the oocyte. After fertilization, required in the zygote for the selective degradation of a subset of maternal membrane proteins including cav-1, chs-1 and rme-2, probably by mediating their K63-linked polyubiquitination. The chain is E3 ubiquitin-protein ligase marc-3 from Caenorhabditis elegans.